Here is an 83-residue protein sequence, read N- to C-terminus: Cytochrome b559 subunit alpha (83 aa).

Residues 21-35 (VIHSITIPSLFIAGW) form a helical membrane-spanning segment. H23 contacts heme.

It belongs to the PsbE/PsbF family. In terms of assembly, heterodimer of an alpha subunit and a beta subunit. PSII is composed of 1 copy each of membrane proteins PsbA, PsbB, PsbC, PsbD, PsbE, PsbF, PsbH, PsbI, PsbJ, PsbK, PsbL, PsbM, PsbT, PsbX, PsbY, PsbZ, Psb30/Ycf12, at least 3 peripheral proteins of the oxygen-evolving complex and a large number of cofactors. It forms dimeric complexes. Heme b is required as a cofactor.

It localises to the plastid. It is found in the chloroplast thylakoid membrane. Its function is as follows. This b-type cytochrome is tightly associated with the reaction center of photosystem II (PSII). PSII is a light-driven water:plastoquinone oxidoreductase that uses light energy to abstract electrons from H(2)O, generating O(2) and a proton gradient subsequently used for ATP formation. It consists of a core antenna complex that captures photons, and an electron transfer chain that converts photonic excitation into a charge separation. The sequence is that of Cytochrome b559 subunit alpha from Adiantum capillus-veneris (Maidenhair fern).